The primary structure comprises 299 residues: MTKIKIVVIVGPTAVGKTALGISLAKALNGEIISGDSQQVYRQLDVGTAKATQEEQEAAVHHLIDIREVTESYSAYEFVQDAQKAISDIVSRGKLPIIVGGTGLYLQSLLEGYHLGGQVDQEAVKAYRQELDQLSDQEVYELLQVKSITIKQLNRRRAIRALELSQFADDLENAETAYEPLIIGLNDDRQVIYDRINQRVDRMLENGLLEEAKWLYEHYPTVQASRGIGYKELFPYFVGEMTLAEASDQLKQNTRRFAKRQLTWFRNRMAVNFTAITAPDYPQVVHDRVRDFLGQKEKS.

11-18 (GPTAVGKT) lines the ATP pocket. Position 13–18 (13–18 (TAVGKT)) interacts with substrate. An interaction with substrate tRNA region spans residues 36 to 39 (DSQQ).

This sequence belongs to the IPP transferase family. Monomer. Requires Mg(2+) as cofactor.

It carries out the reaction adenosine(37) in tRNA + dimethylallyl diphosphate = N(6)-dimethylallyladenosine(37) in tRNA + diphosphate. In terms of biological role, catalyzes the transfer of a dimethylallyl group onto the adenine at position 37 in tRNAs that read codons beginning with uridine, leading to the formation of N6-(dimethylallyl)adenosine (i(6)A). This is tRNA dimethylallyltransferase from Streptococcus pyogenes serotype M6 (strain ATCC BAA-946 / MGAS10394).